Reading from the N-terminus, the 197-residue chain is Peptidyl-tRNA hydrolase (197 aa).

Y21 contacts tRNA. Catalysis depends on H26, which acts as the Proton acceptor. TRNA-binding residues include Y72, N74, and N120.

It belongs to the PTH family. In terms of assembly, monomer.

The protein resides in the cytoplasm. It catalyses the reaction an N-acyl-L-alpha-aminoacyl-tRNA + H2O = an N-acyl-L-amino acid + a tRNA + H(+). In terms of biological role, hydrolyzes ribosome-free peptidyl-tRNAs (with 1 or more amino acids incorporated), which drop off the ribosome during protein synthesis, or as a result of ribosome stalling. Catalyzes the release of premature peptidyl moieties from peptidyl-tRNA molecules trapped in stalled 50S ribosomal subunits, and thus maintains levels of free tRNAs and 50S ribosomes. This chain is Peptidyl-tRNA hydrolase, found in Alkalilimnicola ehrlichii (strain ATCC BAA-1101 / DSM 17681 / MLHE-1).